We begin with the raw amino-acid sequence, 299 residues long: Undecaprenyl-diphosphatase (299 aa).

Helical transmembrane passes span 10–32, 63–83, 112–132, 143–163, 178–198, 213–233, 243–263, and 276–296; these read LFSLMILLAATSELLAACWRNLV, PGVSATAVIQLGSILAVIAYF, LAIAIGTMPILLAGMAIKLFW, LPSIAVVSIVMALLLALAESF, GFVVGLAQALALIPGVSRSGS, AARFCFLLGIPAITLAGLVEL, GGVLPLLVGIVSAAFVSWLAI, and WIFVVYRLLFGVLVLAWWLSG.

It belongs to the UppP family.

It is found in the cell inner membrane. It catalyses the reaction di-trans,octa-cis-undecaprenyl diphosphate + H2O = di-trans,octa-cis-undecaprenyl phosphate + phosphate + H(+). Catalyzes the dephosphorylation of undecaprenyl diphosphate (UPP). Confers resistance to bacitracin. This Prochlorococcus marinus (strain MIT 9313) protein is Undecaprenyl-diphosphatase.